A 339-amino-acid polypeptide reads, in one-letter code: Lipoate-protein ligase A (339 aa).

The region spanning P29–V217 is the BPL/LPL catalytic domain. Residues R71, G76–F79, and K135 contribute to the ATP site. Residue K135 coordinates (R)-lipoate.

The protein belongs to the LplA family. Monomer.

It localises to the cytoplasm. The enzyme catalyses L-lysyl-[lipoyl-carrier protein] + (R)-lipoate + ATP = N(6)-[(R)-lipoyl]-L-lysyl-[lipoyl-carrier protein] + AMP + diphosphate + H(+). It functions in the pathway protein modification; protein lipoylation via exogenous pathway; protein N(6)-(lipoyl)lysine from lipoate: step 1/2. It participates in protein modification; protein lipoylation via exogenous pathway; protein N(6)-(lipoyl)lysine from lipoate: step 2/2. Its function is as follows. Catalyzes both the ATP-dependent activation of exogenously supplied lipoate to lipoyl-AMP and the transfer of the activated lipoyl onto the lipoyl domains of lipoate-dependent enzymes. The protein is Lipoate-protein ligase A of Blochmanniella pennsylvanica (strain BPEN).